Consider the following 483-residue polypeptide: Altronate oxidoreductase (483 aa).

NAD(+) is bound at residue Ile-18–Ala-29.

The protein belongs to the mannitol dehydrogenase family. UxaB subfamily.

The catalysed reaction is D-altronate + NAD(+) = keto-D-tagaturonate + NADH + H(+). It functions in the pathway carbohydrate metabolism; pentose and glucuronate interconversion. The sequence is that of Altronate oxidoreductase from Cronobacter sakazakii (strain ATCC BAA-894) (Enterobacter sakazakii).